A 477-amino-acid chain; its full sequence is Glycogen synthase (477 aa).

Lys-15 contributes to the ADP-alpha-D-glucose binding site.

The protein belongs to the glycosyltransferase 1 family. Bacterial/plant glycogen synthase subfamily.

It catalyses the reaction [(1-&gt;4)-alpha-D-glucosyl](n) + ADP-alpha-D-glucose = [(1-&gt;4)-alpha-D-glucosyl](n+1) + ADP + H(+). It functions in the pathway glycan biosynthesis; glycogen biosynthesis. Its function is as follows. Synthesizes alpha-1,4-glucan chains using ADP-glucose. In Shigella flexneri serotype 5b (strain 8401), this protein is Glycogen synthase.